We begin with the raw amino-acid sequence, 339 residues long: MIILGVESSCDETAAAVVEDGSRVLSDVVASQAALHGPYGGVVPELASRKHVEAILPVLGEAMHEAGVTWGQVDAIAATQGPGLVGALLVGLSAAKALAYALKKPMVAVNHLEGHIQAAFLGREELTRPFVCLVVSGGHTALYRVDPDGTTSFLGSTRDDAAGEAFDKVAKLLALGYPGGVEIERLAAGGDPHAFNFPRAFIDGRSLEFSFSGLKTSVATFVRQHGPPSESGEQGAYRLADLLASFQEAVVEVLVNKTVRAAGMCSVGDIAVVGGVAANLRLRERFEEEAGMHRFELHLPARRYCTDNAVMIAAAAYRTWKRSGFCLDPVDLDARSRWF.

Fe cation is bound by residues histidine 111 and histidine 115. Substrate is bound by residues valine 134–glycine 138, aspartate 167, glycine 180, and asparagine 279. Aspartate 307 is a Fe cation binding site.

This sequence belongs to the KAE1 / TsaD family. Fe(2+) serves as cofactor.

Its subcellular location is the cytoplasm. The enzyme catalyses L-threonylcarbamoyladenylate + adenosine(37) in tRNA = N(6)-L-threonylcarbamoyladenosine(37) in tRNA + AMP + H(+). Its function is as follows. Required for the formation of a threonylcarbamoyl group on adenosine at position 37 (t(6)A37) in tRNAs that read codons beginning with adenine. Is involved in the transfer of the threonylcarbamoyl moiety of threonylcarbamoyl-AMP (TC-AMP) to the N6 group of A37, together with TsaE and TsaB. TsaD likely plays a direct catalytic role in this reaction. This is tRNA N6-adenosine threonylcarbamoyltransferase from Syntrophobacter fumaroxidans (strain DSM 10017 / MPOB).